Reading from the N-terminus, the 317-residue chain is Protein lifeguard 2 (317 aa).

Residues 1–54 (MTQGKLSVANKAPGTEGQQHQANGEKKDAPAVPSAPPSYEEATSGEGLKAGTFP) form a disordered region. A run of 3 helical transmembrane segments spans residues 107–127 (VYTI…LFTF), 139–159 (PGWY…LACC), and 166–186 (FPWN…LTGM). The N-linked (GlcNAc...) asparagine glycan is linked to Asn-192. 4 helical membrane passes run 195–215 (SVLL…IFSF), 226–246 (GVLF…AVLL), 252–272 (PWLH…FLAF), and 291–311 (IFGA…FLQL).

Belongs to the BI1 family. LFG subfamily. In terms of assembly, interacts with FAS/TNFRSF6 and BAX. In terms of tissue distribution, brain. Highly expressed in cerebellum, also found in cortex, olfactory bulb, and hippocampus.

Its subcellular location is the cell membrane. The protein localises to the membrane raft. The protein resides in the postsynaptic cell membrane. Functionally, antiapoptotic protein which protects cells uniquely from Fas-induced apoptosis. Regulates Fas-mediated apoptosis in neurons by interfering with caspase-8 activation. Plays a role in cerebellar development by affecting cerebellar size, internal granular layer (IGL) thickness, and Purkinje cell (PC) development. This is Protein lifeguard 2 (Faim2) from Mus musculus (Mouse).